A 913-amino-acid chain; its full sequence is Protein translocase subunit SecA (913 aa).

ATP contacts are provided by residues Q87, 105-109 (GEGKT), and D512. The interval 864-913 (LDQPEEEPAEVEGQPDVAVASVRTEPKIGRNEPCPCGSGKKYKHCHGQVQ) is disordered. Zn(2+) is bound by residues C897, C899, C908, and H909. Basic residues predominate over residues 903–913 (KKYKHCHGQVQ).

It belongs to the SecA family. Monomer and homodimer. Part of the essential Sec protein translocation apparatus which comprises SecA, SecYEG and auxiliary proteins SecDF-YajC and YidC. The cofactor is Zn(2+).

It localises to the cell inner membrane. It is found in the cytoplasm. The enzyme catalyses ATP + H2O + cellular proteinSide 1 = ADP + phosphate + cellular proteinSide 2.. Functionally, part of the Sec protein translocase complex. Interacts with the SecYEG preprotein conducting channel. Has a central role in coupling the hydrolysis of ATP to the transfer of proteins into and across the cell membrane, serving both as a receptor for the preprotein-SecB complex and as an ATP-driven molecular motor driving the stepwise translocation of polypeptide chains across the membrane. The protein is Protein translocase subunit SecA of Stutzerimonas stutzeri (strain A1501) (Pseudomonas stutzeri).